The chain runs to 303 residues: E3 ubiquitin-protein ligase CHIP (303 aa).

Residues 1–10 (MKGKEEKEGG) are compositionally biased toward basic and acidic residues. The disordered stretch occupies residues 1–30 (MKGKEEKEGGARLGAGGGSPEKSPSAQELK). K2 is covalently cross-linked (Glycyl lysine isopeptide (Lys-Gly) (interchain with G-Cter in ubiquitin)). S19 carries the phosphoserine modification. K22 is covalently cross-linked (Glycyl lysine isopeptide (Lys-Gly) (interchain with G-Cter in ubiquitin)). 2 positions are modified to phosphoserine: S23 and S25. 3 TPR repeats span residues 26-59 (AQELKEQGNRLFVGRKYPEAAACYGRAITRNPLV), 60-93 (AVYYTNRALCYLKMQQHEQALADCRRALELDGQS), and 95-127 (KAHFFLGQCQLEMESYDEAIANLQRAYSLAKEQ). The tract at residues 101-200 (GQCQLEMESY…SHVRAQQACI (100 aa)) is required for interaction with MAPK7. A required for interaction with and ubiquitination of MYOCD region spans residues 142–196 (AKKKRWNSIEERRIHQESELHSYLSRLIAAERERELEECQRNHEGDEDDSHVRAQ). The segment at 143–197 (KKKRWNSIEERRIHQESELHSYLSRLIAAERERELEECQRNHEGDEDDSHVRAQQ) is required for interaction with FOXO1. The tract at residues 143-303 (KKKRWNSIEE…ISENGWVEDY (161 aa)) is required for ubiquitination of FOXO1. S149 is modified (phosphoserine). Residues K221 and K255 each participate in a glycyl lysine isopeptide (Lys-Gly) (interchain with G-Cter in ubiquitin) cross-link. One can recognise a U-box domain in the interval 226-300 (DIPDYLCGKI…DAFISENGWV (75 aa)). S273 carries the phosphoserine modification.

In terms of assembly, homodimer. Interacts with BAG2. Interacts with E2 ubiquitin conjugating enzymes UBE2D1, UBE2D2 and UBE2D3. Detected in a ternary complex containing STUB1, HSPA1A and HSPBP1. Part of a complex composed of STUB1/CHIP, VCP/p97, CHRNA3, and UBXN2A that modulates the ubiquitination and endoplasmic reticulum-associated degradation (ERAD) of CHRNA3. Within the complex UBXN2A acts as a scaffold protein required for the interaction of CHRNA3 with VCP/p97, this interaction also inhibits CHRNA3 ubiquitination by STUB1/CHIP and subsequently ERAD. Interacts with MKKS. Interacts with DNAAF4. Interacts (when monoubiquitinated) with ATXN3. Interacts with UBE2W. Interacts (via the U-box domain) with the UBE2V2-UBE2N heterodimer; the complex has a specific 'Lys-63'-linked polyubiquitination activity. Interacts with DNAJB6. Interacts with FLCN. Interacts with HSP90AA1. Interacts with HSP90. Interacts with UBE2N and UBE2V1. Interacts (via TPR repeats) with HSPA8 (via C-terminus). Interacts (via TPR repeats) with HSPA1A (via C-terminus). Interacts with the non-acetylated form of HSPA1A and HSPA1B. Interacts with SMAD3 and HSP90AB1. Interacts with UBE4B. Interacts with PRMT5. Interacts with MYOCD (via C-terminus). Interacts with FOXO1 (when phosphorylated on 'Ser-256'). Interacts with MAPK7/ERK5; the interaction is enhanced in the presence of IGF1 or MAP2K5 and promotes STUB1/CHIP E3 ligase activity. Interacts with and ubiquitinates ESR1; the interaction is promoted in the absence of estradiol (17-beta-estradiol/E2). Interacts with ESR2. Interacts with and ubiquitinates NFATC3; HSPA1A/HSP70 is required as a co-chaperone. In macrophages, interacts with PAQR3; the interaction promotes PPARG poylubiquitination and STUB1-mediated degradation. Component of the chaperone-assisted selective autophagy (CASA) complex consisting of BAG3, HSPA8/HSC70, HSPB8 and STUB1/CHIP. Monoubiquitinated at Lys-2 following cell stress by UBE2W, promoting the interaction with ATXN3. Auto-ubiquitinated; mediated by UBE2D1 and UBE2D2 and enhanced in the presence of MAP2K5. As to expression, expressed in differentiated myotubes (at protein level). Highly expressed in skeletal muscle, heart, pancreas, brain and placenta. Detected in kidney, liver and lung.

It is found in the cytoplasm. The protein resides in the nucleus. The protein localises to the mitochondrion. The catalysed reaction is S-ubiquitinyl-[E2 ubiquitin-conjugating enzyme]-L-cysteine + [acceptor protein]-L-lysine = [E2 ubiquitin-conjugating enzyme]-L-cysteine + N(6)-ubiquitinyl-[acceptor protein]-L-lysine.. The protein operates within protein modification; protein ubiquitination. Functionally, E3 ubiquitin-protein ligase which targets misfolded chaperone substrates towards proteasomal degradation. Plays a role in the maintenance of mitochondrial morphology and promotes mitophagic removal of dysfunctional mitochondria; thereby acts as a protector against apoptosis in response to cellular stress. Negatively regulates vascular smooth muscle contraction, via degradation of the transcriptional activator MYOCD and subsequent loss of transcription of genes involved in vascular smooth muscle contraction. Promotes survival and proliferation of cardiac smooth muscle cells via ubiquitination and degradation of FOXO1, resulting in subsequent repression of FOXO1-mediated transcription of pro-apoptotic genes. Ubiquitinates ICER-type isoforms of CREM and targets them for proteasomal degradation, thereby acts as a positive effector of MAPK/ERK-mediated inhibition of apoptosis in cardiomyocytes. Inhibits lipopolysaccharide-induced apoptosis and hypertrophy in cardiomyocytes, via ubiquitination and subsequent proteasomal degradation of NFATC3. Collaborates with ATXN3 in the degradation of misfolded chaperone substrates: ATXN3 restricting the length of ubiquitin chain attached to STUB1/CHIP substrates and preventing further chain extension. Ubiquitinates NOS1 in concert with Hsp70 and Hsp40. Modulates the activity of several chaperone complexes, including Hsp70, Hsc70 and Hsp90. Ubiquitinates CHRNA3 targeting it for endoplasmic reticulum-associated degradation in cortical neurons, as part of the STUB1-VCP-UBXN2A complex. Ubiquitinates and promotes ESR1 proteasomal degradation in response to age-related circulating estradiol (17-beta-estradiol/E2) decline, thereby promotes neuronal apoptosis in response to ischemic reperfusion injury. Mediates transfer of non-canonical short ubiquitin chains to HSPA8 that have no effect on HSPA8 degradation. Mediates polyubiquitination of DNA polymerase beta (POLB) at 'Lys-41', 'Lys-61' and 'Lys-81', thereby playing a role in base-excision repair: catalyzes polyubiquitination by amplifying the HUWE1/ARF-BP1-dependent monoubiquitination and leading to POLB-degradation by the proteasome. Mediates polyubiquitination of CYP3A4. Ubiquitinates EPHA2 and may regulate the receptor stability and activity through proteasomal degradation. Acts as a co-chaperone for HSPA1A and HSPA1B chaperone proteins and promotes ubiquitin-mediated protein degradation. Negatively regulates the suppressive function of regulatory T-cells (Treg) during inflammation by mediating the ubiquitination and degradation of FOXP3 in a HSPA1A/B-dependent manner. Catalyzes monoubiquitination of SIRT6, preventing its degradation by the proteasome. Likely mediates polyubiquitination and down-regulates plasma membrane expression of PD-L1/CD274, an immune inhibitory ligand critical for immune tolerance to self and antitumor immunity. Negatively regulates TGF-beta signaling by modulating the basal level of SMAD3 via ubiquitin-mediated degradation. Plays a role in the degradation of TP53. Mediates ubiquitination of RIPK3 leading to its subsequent proteasome-dependent degradation. May regulate myosin assembly in striated muscles together with UBE4B and VCP/p97 by targeting myosin chaperone UNC45B for proteasomal degradation. Ubiquitinates PPARG in macrophages playing a role in M2 macrophages polarization and angiogenesis. The protein is E3 ubiquitin-protein ligase CHIP of Homo sapiens (Human).